A 396-amino-acid chain; its full sequence is MTNEEPLPKKVRLSETDFKVMARDELILRWKQYEAYVQALEGKYTDLNSNDVTGLRESEEKLKQQQQESARRENILVMRLATKEQEMQECTTQIQYLKQVQQPSVAQLRSTMVDPAINLFFLKMKGELEQTKDKLEQAQNELSAWKFTPDSQTGKKLMAKCRMLIQENQELGRQLSQGRIAQLEAELALQKKYSEELKSSQDELNDFIIQLDEEVEGMQSTILVLQQQLKETRQQLAQYQQQQSQASAPSTSRTTASEPVEQSEATSKDCSRLTNGPSNGSSSRQRTSGSGFHREGNTTEDDFPSSPGNGNKSSNSSEERTGRGGSGYVNQLSAGYESVDSPTGSENSLTHQSNDTDSSHDPQEEKAVSGKGNRTVGSRHVQNGLDSSVNVQGSVL.

Position 1 is an N-acetylmethionine (M1). S14 carries the phosphoserine modification. Composition is skewed to low complexity over residues 240–257 (QQQQSQASAPSTSRTTAS), 278–291 (SNGSSSRQRTSGSG), and 304–316 (PSSPGNGNKSSNS). Positions 240–396 (QQQQSQASAP…SSVNVQGSVL (157 aa)) are disordered. S305, S306, and S341 each carry phosphoserine. Polar residues predominate over residues 340-356 (DSPTGSENSLTHQSNDT). T350 is subject to Phosphothreonine. The segment covering 357–368 (DSSHDPQEEKAV) has biased composition (basic and acidic residues). Over residues 380-396 (HVQNGLDSSVNVQGSVL) the composition is skewed to polar residues. Residue S388 is modified to Phosphoserine.

Belongs to the fl(2)d family. Component of the WMM complex, a N6-methyltransferase complex composed of a catalytic subcomplex, named MAC, and of an associated subcomplex, named MACOM. The MAC subcomplex is composed of METTL3 and METTL14. The MACOM subcomplex is composed of WTAP, ZC3H13, CBLL1/HAKAI, VIRMA, and, in some cases of RBM15 (RBM15 or RBM15B). Interacts with WT1. Also a component of a MACOM-like complex, named WTAP complex, composed of WTAP, ZC3H13, CBLL1, VIRMA, RBM15, BCLAF1 and THRAP3. Ubiquitously expressed.

Its subcellular location is the nucleus speckle. The protein localises to the nucleus. The protein resides in the nucleoplasm. It is found in the cytoplasm. In terms of biological role, associated component of the WMM complex, a complex that mediates N6-methyladenosine (m6A) methylation of RNAs, a modification that plays a role in the efficiency of mRNA splicing and RNA processing. Required for accumulation of METTL3 and METTL14 to nuclear speckle. Acts as a mRNA splicing regulator. Regulates G2/M cell-cycle transition by binding to the 3' UTR of CCNA2, which enhances its stability. Impairs WT1 DNA-binding ability and inhibits expression of WT1 target genes. In Homo sapiens (Human), this protein is Pre-mRNA-splicing regulator WTAP.